Here is a 359-residue protein sequence, read N- to C-terminus: 2-amino-3-carboxymuconate-6-semialdehyde decarboxylase (359 aa).

The span at 1–13 shows a compositional bias: low complexity; sequence MENKETTTTTTTT. The tract at residues 1 to 21 is disordered; it reads MENKETTTTTTTTNNGSDKKK. 2 residues coordinate Zn(2+): His-29 and His-31. Substrate is bound at residue Arg-70. Zn(2+)-binding residues include His-197 and Asp-314.

It belongs to the metallo-dependent hydrolases superfamily. ACMSD family. Monomer.

It carries out the reaction 2-amino-3-carboxymuconate 6-semialdehyde + H(+) = 2-aminomuconate 6-semialdehyde + CO2. The protein operates within secondary metabolite metabolism; quinolate metabolism. Functionally, converts alpha-amino-beta-carboxymuconate-epsilon-semialdehyde (ACMS) to alpha-aminomuconate semialdehyde (AMS). In Dictyostelium discoideum (Social amoeba), this protein is 2-amino-3-carboxymuconate-6-semialdehyde decarboxylase (acmsd).